Reading from the N-terminus, the 354-residue chain is Deoxyribonuclease-2-beta (354 aa).

Residues 1–22 (MTAKPLRTVLSLLFFALSGVLG) form the signal peptide. 9 N-linked (GlcNAc...) asparagine glycosylation sites follow: Asn-70, Asn-77, Asn-95, Asn-98, Asn-114, Asn-129, Asn-208, Asn-271, and Asn-319.

The protein belongs to the DNase II family. In terms of tissue distribution, highly expressed in the eye lens. Detected in liver, but not in the other tissues tested.

Its subcellular location is the lysosome. The catalysed reaction is Endonucleolytic cleavage to nucleoside 3'-phosphates and 3'-phosphooligonucleotide end-products.. Hydrolyzes DNA under acidic conditions. Does not require divalent cations for activity. Participates in the degradation of nuclear DNA during lens cell differentiation. In Mus musculus (Mouse), this protein is Deoxyribonuclease-2-beta (Dnase2b).